Reading from the N-terminus, the 150-residue chain is C-type lectin mosGCTL-7 (150 aa).

The first 17 residues, 1–17, serve as a signal peptide directing secretion; sequence MQLVHVLVVLLSVVAHA. The C-type lectin domain maps to 18–140; that stretch reads KKFFIPNLKA…CRGFKAYIVC (123 aa). The N-linked (GlcNAc...) asparagine glycan is linked to Asn67. Cys111 and Cys131 are disulfide-bonded.

In terms of assembly, interacts with putative receptor-type tyrosine-protein phosphatase mosPTP-1; the interaction probably mediates the recruitment of Japanese encephalitis virus particles in complex with C-type lectin mosGCTL-7 to the cell surface. (Microbial infection) Interacts with envelope protein E (glycosylated) of Japanese encephalitis virus in a calcium-dependent manner.

Its subcellular location is the secreted. Its function is as follows. Carbohydrate-binding protein. Functionally, (Microbial infection) Facilitates Japanese encephalitis virus infection in mosquitoes probably via capturing viral particles and presenting them to a ligand on the cell surface, thereby facilitating viral entry. The protein is C-type lectin mosGCTL-7 of Aedes aegypti (Yellowfever mosquito).